The chain runs to 398 residues: Protein ELC (398 aa).

Positions 18–162 (ALSQRGPSSV…ARDPPLYSRR (145 aa)) constitute a UEV domain. Positions 157–202 (PLYSRRRPQPPPPSPPTVYDSSLSRPPSADQSLPRPFPPSPYGGGV) are disordered. Residues 175 to 187 (YDSSLSRPPSADQ) show a composition bias toward polar residues. Positions 247–291 (EAEAEELLSLQAGLKRREDELNIGLKEMVEEKETLEQQLQIISMN) form a coiled coil. The SB domain maps to 322 to 390 (DTLSKQMLEC…RAAQMEVQVA (69 aa)).

It belongs to the ubiquitin-conjugating enzyme family. UEV subfamily. Component of the endosomal sorting required for transport complex I (ESCRT-I), composed of ELC, VPS28 and VPS37. Interacts with VPS28 and VPS37. Binds ubiquitin in vitro. Interacts with FREE1. Interacts with TOL9/TOM1D. Interacts with BRO1/ALIX. Interacts with SINAT1, SINAT2, SINAT3 and SINAT4. Post-translationally, ubiquitinated by SINAT1, SINAT2, SINAT3 and SINAT4 for subsequent proteasomal degradation. In terms of tissue distribution, expressed in roots, stems, leaves and flowers.

The protein resides in the early endosome. Its subcellular location is the late endosome. It is found in the prevacuolar compartment. In terms of biological role, component of the ESCRT-I complex (endosomal sorting complex required for transport I), a regulator of vesicular trafficking process. Required for the sorting of endocytic ubiquitinated cargos into multivesicular bodies (MVBs). May control nuclear division through the microtubule cytoskeleton. In Arabidopsis thaliana (Mouse-ear cress), this protein is Protein ELC.